A 211-amino-acid polypeptide reads, in one-letter code: Suppressor of cytokine signaling 1 (211 aa).

Positions 1–53 (MVAHNQVAADNAVSTAAEPRRRPEPSSSSSSSPAAPARPRPCPAVPAPAPGDT) are disordered. Residues 25 to 35 (PSSSSSSSPAA) are compositionally biased toward low complexity. Residues 36–49 (PARPRPCPAVPAPA) show a composition bias toward pro residues. Residues 55 to 66 (FRTFRSHADYRR) are kinase inhibitory region (KIR). The interval 67 to 78 (ITRASALLDACG) is extended SH2 subdomain (ESS). Residues 79 to 174 (FYWGPLSVHG…PLRQRRVRPL (96 aa)) enclose the SH2 domain. An SOCS box domain is found at 161 to 210 (MLGAPLRQRRVRPLQELCRQRIVATVGRENLARIPLNPVLRDYLSSFPFQ). The segment at 173–182 (PLQELCRQRI) is interaction with Elongin BC complex.

The protein belongs to the SOCS1 family. As to quaternary structure, interacts with multiple activated signaling proteins of the tyrosine kinase signaling pathway including JAK family kinases, TEC, KIT, GRB2 and VAV. Binding to JAKs is mediated through the KIR and SH2 domains to a phosphorylated tyrosine residue within the JAK JH1 domain. Binds the SH3 domain of GRB2 via diproline determinants in the N-terminus, and the N-terminal regulatory domain of VAV. Interacts with the Elongin BC complex (ELOB and ELOC). Component of an ECS CBC(SOCS1) E3 ubiquitin-protein ligase complex which contains Elongin BC, CUL5, RBX1 and SOCS1. Interacts (via SH2 domain and SOCS box) with TRIM8. Interacts with AXL, CUL2 and FGFR3. Interacts with INSR. Interacts with TRIM8. Interacts with DCUN1D1. Interacts with IFNGR1. In terms of tissue distribution, expressed in all tissues with high expression in spleen, small intestine and peripheral blood leukocytes.

The protein localises to the nucleus. It localises to the cytoplasmic vesicle. The protein operates within protein modification; protein ubiquitination. In terms of biological role, essential negative regulator of type I and type II interferon (IFN) signaling, as well as that of other cytokines, including IL2, IL4, IL6 and leukemia inhibitory factor (LIF). Downregulates cytokine signaling by inhibiting the JAK/STAT signaling pathway. Acts by binding to JAK proteins and to IFNGR1 and inhibiting their kinase activity. In vitro, suppresses Tec protein-tyrosine activity. Regulates IFN-gamma (IFNG)-mediated sensory neuron survival. Probable substrate recognition component of an ECS (Elongin BC-CUL2/5-SOCS-box protein) E3 ubiquitin ligase complex which mediates the ubiquitination and subsequent proteasomal degradation of target proteins. The sequence is that of Suppressor of cytokine signaling 1 (SOCS1) from Homo sapiens (Human).